Consider the following 146-residue polypeptide: Acetyl-CoA decarbonylase/synthase complex subunit epsilon (146 aa).

Belongs to the CdhB family. Heterotetramer of two alpha and two epsilon subunits. The ACDS complex is made up of alpha, epsilon, beta, gamma and delta subunits with a probable stoichiometry of (alpha(2)epsilon(2))(4)-beta(8)-(gamma(1)delta(1))(8).

Its function is as follows. Part of a complex that catalyzes the reversible cleavage of acetyl-CoA, allowing autotrophic growth from CO(2). The alpha-epsilon subcomponent functions as a carbon monoxide dehydrogenase. The precise role of the epsilon subunit is unclear; it may have a stabilizing role within the alpha(2)epsilon(2) component and/or be involved in electron transfer to FAD during a potential FAD-mediated CO oxidation. The protein is Acetyl-CoA decarbonylase/synthase complex subunit epsilon of Methanocaldococcus jannaschii (strain ATCC 43067 / DSM 2661 / JAL-1 / JCM 10045 / NBRC 100440) (Methanococcus jannaschii).